Reading from the N-terminus, the 213-residue chain is Ribosomal RNA small subunit methyltransferase G (213 aa).

S-adenosyl-L-methionine is bound by residues glycine 72, phenylalanine 77, 125 to 126 (IE), and arginine 141.

The protein belongs to the methyltransferase superfamily. RNA methyltransferase RsmG family.

It is found in the cytoplasm. The catalysed reaction is guanosine(527) in 16S rRNA + S-adenosyl-L-methionine = N(7)-methylguanosine(527) in 16S rRNA + S-adenosyl-L-homocysteine. In terms of biological role, specifically methylates the N7 position of guanine in position 527 of 16S rRNA. This is Ribosomal RNA small subunit methyltransferase G from Sinorhizobium medicae (strain WSM419) (Ensifer medicae).